The primary structure comprises 321 residues: Hydrolase 3 (321 aa).

An Involved in the stabilization of the negatively charged intermediate by the formation of the oxyanion hole motif is present at residues 80-82; that stretch reads HGA. Active-site residues include S172 and D267.

It belongs to the 'GDXG' lipolytic enzyme family.

The catalysed reaction is dihydroprecondylocarpine acetate + NADPH = (+)-vincadifformine + acetate + NADP(+). It participates in alkaloid biosynthesis. Component of the seco-iridoid and derivatives monoterpenoid indole alkaloids (MIAs, e.g. vincadifformine) biosynthesis pathway. Catalyzes the conversion of O-acetylstemmadenine (OAS) to vincadifformine. May also trigger the formation of additional unknown MIAs. In Catharanthus roseus (Madagascar periwinkle), this protein is Hydrolase 3.